Here is a 366-residue protein sequence, read N- to C-terminus: MPLTKYKAAAVTSEPCWFDLTAGVQKTIDFINEAGAAGCKLVAFPEVWIPGYPYWMWKVNYQQSLPLLKKYRENSLPIDSEEFRKIRRAARDNQIHVSLGFSEIDHATCYLTQTLIDPTGEVINHRRKIKPTHVEKLVYGDGAGDTFKSVTQTELGRLGQLNCWENMNPFLKALNVSEGEQIHIAAWPVYPGKETLNYPDPATNVAEPASDLVTPAYAIETGTWTLAPFQRLSKEGLKINTPEGIEPETDPSTYNGHARIYRPDGSLYAKPDKDFDGLMFVDIDLNECQLTKALADFSGHYMRPDLIRLLVDTRRKELVTEADPHGGITSYSTRQRLGLDVLLDSDVQKQKKSGASDLGATNALAY.

The CN hydrolase domain occupies 6–285 (YKAAAVTSEP…DGLMFVDIDL (280 aa)). E46 serves as the catalytic Proton acceptor. K128 is a catalytic residue. C163 functions as the Nucleophile in the catalytic mechanism.

This sequence belongs to the carbon-nitrogen hydrolase superfamily. Nitrilase family. In terms of assembly, oligomer of dimers, forming left-handed helical fibers.

It carries out the reaction formamide = hydrogen cyanide + H2O. In terms of biological role, catalyzes the hydration of cyanide to formamide. Degradation of cyanide may be important for plant pathogenic fungi in infection of cyanogenic plants. Can also transform some nitriles like 2-cyanopyridine and fumaronitrile. This is Cyanide hydratase from Pyrenophora teres f. teres (strain 0-1) (Barley net blotch fungus).